A 656-amino-acid polypeptide reads, in one-letter code: Sulfate transporter 1.3 (656 aa).

Residues 1-30 (MSARAHPVDDDGEISPVERSSPRQANTPYV) are disordered. Residues 1–94 (MSARAHPVDD…GRKYNLKLFR (94 aa)) lie on the Cytoplasmic side of the membrane. The chain crosses the membrane as a helical span at residues 95-115 (GDLIAGLTIASLCIPQDIGYA). The Extracellular portion of the chain corresponds to 116–119 (KLAS). A helical transmembrane segment spans residues 120-140 (LDPKYGLYSSFVPPLVYACMG). Over 141–144 (SSKD) the chain is Cytoplasmic. Residues 145–165 (IAIGPVAVVSLLLGTLLRAEI) form a helical membrane-spanning segment. Topologically, residues 166–176 (DPNTNPNEYLR) are extracellular. The next 2 membrane-spanning stretches (helical) occupy residues 177-197 (LAFT…FFRL) and 198-218 (GFLI…GAAI). The Extracellular segment spans residues 219-256 (TIALQQLKGFLGINKFTKKTDIIAVLSSVISSAHHGWN). The chain crosses the membrane as a helical span at residues 257–277 (WQTILISASFLIFLLISKFIG). At 278 to 283 (KRNKKL) the chain is on the cytoplasmic side. A helical membrane pass occupies residues 284-304 (FWIPAIAPLVSVIISTFFVYI). Over 305–342 (TRADKKGVQIVKHLDKGLNPSSLRLIYFSGDYLLKGFR) the chain is Extracellular. A helical transmembrane segment spans residues 343–363 (IGVVSGMVALTEAVAIGRTFA). The Cytoplasmic segment spans residues 364–375 (AMKDYQIDGNKE). Residues 376 to 396 (MVALGAMNVIGSMTSCYVSTG) form a helical membrane-spanning segment. Topologically, residues 397–412 (SFSRSAVNFMAGCQTA) are extracellular. A helical transmembrane segment spans residues 413 to 433 (VSNIIMSIVVLLTLLFLTPLF). Residues 434-441 (KYTPNAIL) lie on the Cytoplasmic side of the membrane. The chain crosses the membrane as a helical span at residues 442–462 (AAIIINAVIPLVDVNATILIF). The Extracellular portion of the chain corresponds to 463–473 (KIDKLDFVACM). Residues 474-494 (GAFFGVIFVSVEIGLLIAVGI) form a helical membrane-spanning segment. Residues 495–656 (SFAKILLQVT…SCSPKLSDEV (162 aa)) lie on the Cytoplasmic side of the membrane. The region spanning 525–648 (QYPEATRIPG…LTVAEAVDSC (124 aa)) is the STAS domain.

Belongs to the SLC26A/SulP transporter (TC 2.A.53) family. As to expression, expressed in the phloem of cotyledons, hypocotyls and roots.

The protein resides in the membrane. High-affinity H(+)/sulfate cotransporter that mediates the loading of sulfate into the sieve tube. Plays a central role in the regulation of sulfate assimilation. This is Sulfate transporter 1.3 (SULTR1;3) from Arabidopsis thaliana (Mouse-ear cress).